The sequence spans 331 residues: UDP-GalNAc:beta-1,3-N-acetylgalactosaminyltransferase 1 (331 aa).

The Cytoplasmic segment spans residues 1-20 (MAPAVLTALPNRMSLRSLKW). A helical; Signal-anchor for type II membrane protein membrane pass occupies residues 21–43 (SLLLLSLLSFLVIWYLSLPHYNV). Over 44–331 (IERVNWMYFY…VMLRNTTCHY (288 aa)) the chain is Lumenal. N-linked (GlcNAc...) asparagine glycans are attached at residues asparagine 72, asparagine 154, asparagine 198, asparagine 212, and asparagine 326.

The protein belongs to the glycosyltransferase 31 family. Requires Mg(2+) as cofactor. In terms of tissue distribution, detected in brain, ovary, kidney, uterus and stomach. In ovary, specifically expressed in follicular granulosa cells and shows particularly strong expression at later stages of follicle development.

Its subcellular location is the golgi apparatus membrane. It carries out the reaction a globoside Gb3Cer (d18:1(4E)) + UDP-N-acetyl-alpha-D-galactosamine = a globoside Gb4Cer (d18:1(4E)) + UDP + H(+). Its pathway is protein modification; protein glycosylation. Functionally, transfers N-acetylgalactosamine onto globotriaosylceramide. Plays a critical role in preimplantation stage embryonic development. This chain is UDP-GalNAc:beta-1,3-N-acetylgalactosaminyltransferase 1, found in Mus musculus (Mouse).